A 371-amino-acid chain; its full sequence is Putative glutamate--cysteine ligase 2 (371 aa).

It belongs to the glutamate--cysteine ligase type 2 family. YbdK subfamily.

The enzyme catalyses L-cysteine + L-glutamate + ATP = gamma-L-glutamyl-L-cysteine + ADP + phosphate + H(+). In terms of biological role, ATP-dependent carboxylate-amine ligase which exhibits weak glutamate--cysteine ligase activity. The protein is Putative glutamate--cysteine ligase 2 of Burkholderia mallei (strain NCTC 10247).